The sequence spans 425 residues: Dihydroorotase (425 aa).

Zn(2+) is bound by residues histidine 61 and histidine 63. Substrate is bound by residues 63–65 (HLR) and asparagine 95. Zn(2+) is bound by residues aspartate 153, histidine 180, and histidine 233. Position 279 (asparagine 279) interacts with substrate. Residue aspartate 306 participates in Zn(2+) binding. The active site involves aspartate 306. Histidine 310 is a substrate binding site.

Belongs to the metallo-dependent hydrolases superfamily. DHOase family. Class I DHOase subfamily. Zn(2+) is required as a cofactor.

It carries out the reaction (S)-dihydroorotate + H2O = N-carbamoyl-L-aspartate + H(+). It functions in the pathway pyrimidine metabolism; UMP biosynthesis via de novo pathway; (S)-dihydroorotate from bicarbonate: step 3/3. Functionally, catalyzes the reversible cyclization of carbamoyl aspartate to dihydroorotate. This chain is Dihydroorotase, found in Geotalea daltonii (strain DSM 22248 / JCM 15807 / FRC-32) (Geobacter daltonii).